The following is a 436-amino-acid chain: Protein TolB homolog (436 aa).

An N-terminal signal peptide occupies residues 1–27 (MRHSIRLTAALLLAFIACFSFPLSAMA).

Belongs to the TolB family.

The protein localises to the periplasm. The chain is Protein TolB homolog from Chlorobium luteolum (strain DSM 273 / BCRC 81028 / 2530) (Pelodictyon luteolum).